Here is a 342-residue protein sequence, read N- to C-terminus: S-adenosylmethionine:tRNA ribosyltransferase-isomerase (342 aa).

Belongs to the QueA family. Monomer.

It localises to the cytoplasm. It catalyses the reaction 7-aminomethyl-7-carbaguanosine(34) in tRNA + S-adenosyl-L-methionine = epoxyqueuosine(34) in tRNA + adenine + L-methionine + 2 H(+). It participates in tRNA modification; tRNA-queuosine biosynthesis. Transfers and isomerizes the ribose moiety from AdoMet to the 7-aminomethyl group of 7-deazaguanine (preQ1-tRNA) to give epoxyqueuosine (oQ-tRNA). This Streptococcus pyogenes serotype M6 (strain ATCC BAA-946 / MGAS10394) protein is S-adenosylmethionine:tRNA ribosyltransferase-isomerase.